Consider the following 657-residue polypeptide: C4-dicarboxylate transport sensor protein DctS (657 aa).

Over 1–26 (MRDTTGGPAGAEVWTVPGLLGARKLD) the chain is Cytoplasmic. The chain crosses the membrane as a helical span at residues 27 to 51 (LLALIPLVAIVALMTLVGALLFAVA). At 52–252 (QSDANRARAK…AYDAPDAFGN (201 aa)) the chain is on the periplasmic side. A helical membrane pass occupies residues 253 to 273 (AALLAAIGALSVFAVLAMVVL). Residues 274–657 (HRNALRRRMA…LPVPQEGAPA (384 aa)) lie on the Cytoplasmic side of the membrane. Positions 289 to 361 (AEMAFRRAME…ARQRQLIEGQ (73 aa)) constitute a PAS domain. Residues 365-417 (QAFETRFRRSDGSEIEVQVFEAPLIDAGGRHRGWMGSVIDITQAKQAARLARA) enclose the PAC domain. An inter-domain linker region spans residues 407–422 (QAKQAARLARAQDESL). In terms of domain architecture, Histidine kinase spans 437-652 (TLAHELNQPL…VFTVTLPVPQ (216 aa)). H440 is subject to Phosphohistidine; by autocatalysis.

Its subcellular location is the cell inner membrane. It catalyses the reaction ATP + protein L-histidine = ADP + protein N-phospho-L-histidine.. In terms of biological role, member of the two-component regulatory system DctS/DctR involved in the transport of C4-dicarboxylates. DctS functions as a membrane-associated protein kinase that phosphorylates DctR in response to environmental signals. The chain is C4-dicarboxylate transport sensor protein DctS (dctS) from Rhodobacter capsulatus (Rhodopseudomonas capsulata).